A 309-amino-acid chain; its full sequence is tRNA uridine(34) hydroxylase (309 aa).

A Rhodanese domain is found at 129-223; it reads SEPGTIVIDT…YLEEVPAEQS (95 aa). C183 functions as the Cysteine persulfide intermediate in the catalytic mechanism. The segment at 288–309 is disordered; it reads YAERQRQVELAQARGKRPHIGS.

This sequence belongs to the TrhO family.

The catalysed reaction is uridine(34) in tRNA + AH2 + O2 = 5-hydroxyuridine(34) in tRNA + A + H2O. Functionally, catalyzes oxygen-dependent 5-hydroxyuridine (ho5U) modification at position 34 in tRNAs. This is tRNA uridine(34) hydroxylase from Mesorhizobium japonicum (strain LMG 29417 / CECT 9101 / MAFF 303099) (Mesorhizobium loti (strain MAFF 303099)).